Consider the following 212-residue polypeptide: External core antigen (212 aa).

The N-terminal stretch at 1-19 (MQLFHLCLIISCSCPTVQA) is a signal peptide. The segment at 25–27 (GWL) is HBEAG. The segment at 165–212 (NAPILSTLPETTVVRRRGRSPRRRTPSPRRRRSQSPRRRRSQSPASQC) is disordered. The segment covering 178–205 (VRRRGRSPRRRTPSPRRRRSQSPRRRRS) has biased composition (basic residues). A 1; half-length repeat occupies 184–190 (SPRRRTP). The 3 X 8 AA repeats of S-P-R-R-R-R-S-Q stretch occupies residues 184 to 206 (SPRRRTPSPRRRRSQSPRRRRSQ). A propeptide spanning residues 184–212 (SPRRRTPSPRRRRSQSPRRRRSQSPASQC) is cleaved from the precursor. A run of 2 repeats spans residues 191–198 (SPRRRRSQ) and 199–206 (SPRRRRSQ).

It belongs to the orthohepadnavirus precore antigen family. Homodimerizes. Phosphorylated. Post-translationally, cleaved by host furin.

The protein resides in the secreted. It is found in the host nucleus. Its function is as follows. May regulate immune response to the intracellular capsid in acting as a T-cell tolerogen, by having an immunoregulatory effect which prevents destruction of infected cells by cytotoxic T-cells. This immune regulation may predispose to chronicity during perinatal infections and prevent severe liver injury during adult infections. The protein is External core antigen of Hepatitis B virus genotype F2 subtype adw4q (isolate Senegal/9203) (HBV-F).